Here is a 261-residue protein sequence, read N- to C-terminus: Hemin import ATP-binding protein HmuV (261 aa).

The ABC transporter domain maps to L5–D241. Residue G37 to S44 participates in ATP binding.

This sequence belongs to the ABC transporter superfamily. Heme (hemin) importer (TC 3.A.1.14.5) family. In terms of assembly, the complex is composed of two ATP-binding proteins (HmuV), two transmembrane proteins (HmuU) and a solute-binding protein (HmuT).

The protein localises to the cell inner membrane. Part of the ABC transporter complex HmuTUV involved in hemin import. Responsible for energy coupling to the transport system. The protein is Hemin import ATP-binding protein HmuV of Rhodopseudomonas palustris (strain BisB5).